The chain runs to 992 residues: Disks large-associated protein 4 (992 aa).

Residues 1-20 (MKGLGDSRPRHLSDSLDPPH) are compositionally biased toward basic and acidic residues. 3 disordered regions span residues 1 to 30 (MKGL…TDRN), 47 to 66 (PGQN…QLPP), and 157 to 206 (LEGT…GWWS). Over residues 162-171 (GKVGGNGSKK) the composition is skewed to gly residues. Residues 172–194 (GGMEDGKGRRAKSKERAKAGEPK) are compositionally biased toward basic and acidic residues. A phosphoserine mark is found at S206 and S207. R291 is subject to Omega-N-methylarginine. The interval 342–396 (STTLLSPRETDAAAEGPIPCRRMRSGSYIKAMGDEDSDESGGSPKPSPKTAARRQ) is disordered. 6 positions are modified to phosphoserine: S378, S381, S388, S405, S415, and S421. 3 disordered regions span residues 527–751 (SVSL…GPRQ), 763–798 (SYGD…AQPG), and 915–992 (TPEK…QTRL). Positions 528–554 (VSLQSLSPPPSTGSLSNSRTLPSSSCL) are enriched in low complexity. Residues 576–591 (VTVQSSTESAQDTYLD) are compositionally biased toward polar residues. A phosphoserine mark is found at S580, S581, S609, S611, S665, and S744. Residues 600–620 (TSQSGLSNSSDSLDSSTRPPS) show a composition bias toward low complexity. Position 915 is a phosphothreonine (T915). Basic and acidic residues-rich tracts occupy residues 915-925 (TPEKRKEEKKP) and 940-958 (VSRD…EARK). The span at 969–978 (VRQNSATESA) shows a compositional bias: polar residues. S973 carries the phosphoserine modification.

This sequence belongs to the SAPAP family. Interacts with DLG1 and DLG4/PSD-95.

The protein resides in the membrane. May play a role in the molecular organization of synapses and neuronal cell signaling. Could be an adapter protein linking ion channel to the subsynaptic cytoskeleton. May induce enrichment of PSD-95/SAP90 at the plasma membrane. This Homo sapiens (Human) protein is Disks large-associated protein 4 (DLGAP4).